The primary structure comprises 74 residues: Putative defensin-like protein 12 (74 aa).

The signal sequence occupies residues 1–26 (MAKPCAAFLVFLCLSMLILSIPDISC). 3 cysteine pairs are disulfide-bonded: C26–C50, C33–C59, and C39–C61.

This sequence belongs to the DEFL family.

Its subcellular location is the secreted. The polypeptide is Putative defensin-like protein 12 (Arabidopsis thaliana (Mouse-ear cress)).